The chain runs to 137 residues: Putative pre-16S rRNA nuclease (137 aa).

This sequence belongs to the YqgF nuclease family.

Its subcellular location is the cytoplasm. Functionally, could be a nuclease involved in processing of the 5'-end of pre-16S rRNA. The chain is Putative pre-16S rRNA nuclease from Actinobacillus pleuropneumoniae serotype 7 (strain AP76).